The sequence spans 702 residues: K(+)-insensitive pyrophosphate-energized proton pump (702 aa).

4 helical membrane-spanning segments follow: residues Gly-3–Ile-23, Ala-63–Ile-83, Met-130–Ile-150, and Val-162–Phe-182. Lys-184 is a binding site for substrate. Mg(2+) contacts are provided by Asp-187, Asp-191, Asn-214, and Asp-217. Transmembrane regions (helical) follow at residues Ala-234–Met-254, Thr-255–Gly-275, Gly-294–Pro-314, Gly-329–Val-349, Gly-379–Ile-399, and Leu-407–Leu-427. Asp-435 lines the Mg(2+) pocket. 4 consecutive transmembrane segments (helical) span residues Ala-466–Ala-486, Tyr-517–Met-537, Ile-586–Ile-606, and Ala-612–Ile-632. Residues Asp-642, Asp-668, and Asp-672 each coordinate Ca(2+). Residue Lys-675 participates in substrate binding.

The protein belongs to the H(+)-translocating pyrophosphatase (TC 3.A.10) family. K(+)-insensitive subfamily. Homodimer. It depends on Mg(2+) as a cofactor.

It is found in the cell inner membrane. The enzyme catalyses diphosphate + H2O + H(+)(in) = 2 phosphate + 2 H(+)(out). Its function is as follows. Proton pump that utilizes the energy of pyrophosphate hydrolysis as the driving force for proton movement across the membrane. Generates a proton motive force. The protein is K(+)-insensitive pyrophosphate-energized proton pump of Rhodospirillum rubrum (strain ATCC 11170 / ATH 1.1.1 / DSM 467 / LMG 4362 / NCIMB 8255 / S1).